Here is a 316-residue protein sequence, read N- to C-terminus: RING finger protein 148 (316 aa).

Positions 1–12 (MLLCVSCLSVNG) are cleaved as a signal peptide. Asparagine 56 carries N-linked (GlcNAc...) asparagine glycosylation. The PA domain occupies 84–178 (VSGAVVLPEG…GNLKGMELLH (95 aa)). The next 2 membrane-spanning stretches (helical) occupy residues 173–193 (GMEL…IEVG) and 204–224 (VMSL…YCAW). The RING-type; atypical zinc-finger motif lies at 269 to 310 (CVVCFDMYKAQDVIRILTCKHFFHKTCIDPWLLAHRTCPMCK).

It localises to the membrane. This chain is RING finger protein 148 (Rnf148), found in Mus musculus (Mouse).